Reading from the N-terminus, the 1462-residue chain is NK-tumor recognition protein (1462 aa).

A PPIase cyclophilin-type domain is found at 10–175 (HFDIEINREP…ADVRVIDCGV (166 aa)). Disordered stretches follow at residues 187 to 591 (KKRK…TMAQ) and 607 to 627 (VIPL…KPWK). A compositionally biased stretch (low complexity) spans 198–213 (SDSSSNSSSSSESSSE). Basic residues predominate over residues 221 to 240 (SRRRKHKRRPKVKRSKKRRK). Composition is skewed to basic and acidic residues over residues 241-250 (EASSSEEPRN) and 258-286 (GHSE…RPEE). Lys323 participates in a covalent cross-link: Glycyl lysine isopeptide (Lys-Gly) (interchain with G-Cter in SUMO2). Residues 329 to 345 (SGRKIKGRGTIRYHTPP) are compositionally biased toward basic residues. Ser379, Ser401, and Ser416 each carry phosphoserine. The span at 382–402 (KWSKGDKLSDPCSSRWDERSL) shows a compositional bias: basic and acidic residues. Residues 403 to 421 (SQRSRSWSYNGYYSDLSTA) show a composition bias toward polar residues. Residues 423 to 459 (HSGHHKKRRKEKKVKHKKKGKKQKHCRRHKQTKKRRI) show a composition bias toward basic residues. Residues Ser463 and Ser471 each carry the phosphoserine modification. Residues 497–507 (KRDWSKSDKDV) show a composition bias toward basic and acidic residues. Low complexity predominate over residues 524–542 (HSQSYSRGSSRSRTASKSS). Over residues 543 to 568 (SHSRSRSKSRSSSKSGHRKRASKSPR) the composition is skewed to basic residues. Glycyl lysine isopeptide (Lys-Gly) (interchain with G-Cter in SUMO2) cross-links involve residues Lys578 and Lys581. Phosphoserine is present on Ser613. A Glycyl lysine isopeptide (Lys-Gly) (interchain with G-Cter in SUMO2) cross-link involves residue Lys639. At Ser648 the chain carries Phosphoserine. Residues Lys656 and Lys666 each participate in a glycyl lysine isopeptide (Lys-Gly) (interchain with G-Cter in SUMO2) cross-link. The interval 658 to 1072 (TGSSSSYHKR…EEDLSGKHDT (415 aa)) is disordered. Low complexity-rich tracts occupy residues 699 to 725 (SRSY…PSSR) and 736 to 749 (SQCS…SISS). The span at 754-774 (RAKRRLRSSGKKNSVSHKKHS) shows a compositional bias: basic residues. The span at 775–800 (SSSEKTLHSKYVKGRDRSSCVRKYSE) shows a compositional bias: basic and acidic residues. The segment covering 801 to 815 (SRSSLDYSSDSEQSS) has biased composition (low complexity). Basic and acidic residues-rich tracts occupy residues 823-870 (QEKE…DHLR) and 885-909 (WDSE…SSDK). Phosphoserine is present on residues Ser866, Ser887, Ser889, Ser891, and Ser907. Residues 910-922 (EEGEATSDSESEV) are compositionally biased toward acidic residues. Positions 932–969 (TTKSSTNTSLPDDNGAWKSSKQRTSTSDSEGSCSNSEN) are enriched in polar residues. Residues 988–1013 (EHTKKVKEKLKGKKDKKHKAPKRKQA) are compositionally biased toward basic residues. The segment covering 1022–1031 (FGEEEEEEID) has biased composition (acidic residues). Residues 1032–1072 (DKQVTQESKEKKVSENNETIKDNILKTEKSSEEDLSGKHDT) are compositionally biased toward basic and acidic residues. Lys1057 is covalently cross-linked (Glycyl lysine isopeptide (Lys-Gly) (interchain with G-Cter in SUMO2)). A phosphoserine mark is found at Ser1077 and Ser1146. Residues 1129–1156 (MEICTPDRSSPAKVEETSPLGNARLDTP) are disordered. Thr1155 bears the Phosphothreonine mark. A Glycyl lysine isopeptide (Lys-Gly) (interchain with G-Cter in SUMO2) cross-link involves residue Lys1163. The interval 1169 to 1215 (EHPQAEVVKQESSMSESKVLGEVGKQDSSSASLASAGESTGKKEVAE) is disordered. Residue Lys1177 forms a Glycyl lysine isopeptide (Lys-Gly) (interchain with G-Cter in SUMO1); alternate linkage. Residue Lys1177 forms a Glycyl lysine isopeptide (Lys-Gly) (interchain with G-Cter in SUMO2); alternate linkage. Phosphoserine is present on Ser1203. Glycyl lysine isopeptide (Lys-Gly) (interchain with G-Cter in SUMO2) cross-links involve residues Lys1216, Lys1225, and Lys1258. The interval 1251–1462 (LTTVPEMKPQ…RSPSESSRYS (212 aa)) is disordered. The interval 1311–1348 (SRSPSRSRSKSETKSRHRTRSVSYSHSRSRSRSSTSSY) is arg/Ser tandem repeat-rich. 2 stretches are compositionally biased toward low complexity: residues 1331–1351 (SVSY…YRSR) and 1359–1376 (RGWY…SYRS). The segment covering 1377 to 1388 (YKSHRTSSRSRS) has biased composition (basic residues). Low complexity predominate over residues 1389–1410 (RSSSYDPHSRSRSYTYDSYYSR). The span at 1425 to 1435 (RGRSYNRRSRS) shows a compositional bias: basic residues.

The protein resides in the cell membrane. The catalysed reaction is [protein]-peptidylproline (omega=180) = [protein]-peptidylproline (omega=0). With respect to regulation, inhibited by cyclosporin A (CsA). Its function is as follows. PPIase that catalyzes the cis-trans isomerization of proline imidic peptide bonds in oligopeptides and may therefore assist protein folding. Component of a putative tumor-recognition complex involved in the function of NK cells. The protein is NK-tumor recognition protein of Homo sapiens (Human).